The primary structure comprises 446 residues: Phosphoglucosamine mutase (446 aa).

Ser-99 functions as the Phosphoserine intermediate in the catalytic mechanism. Positions 99, 242, 244, and 246 each coordinate Mg(2+). A Phosphoserine modification is found at Ser-99.

The protein belongs to the phosphohexose mutase family. Requires Mg(2+) as cofactor. Post-translationally, activated by phosphorylation.

The enzyme catalyses alpha-D-glucosamine 1-phosphate = D-glucosamine 6-phosphate. Its function is as follows. Catalyzes the conversion of glucosamine-6-phosphate to glucosamine-1-phosphate. The sequence is that of Phosphoglucosamine mutase from Campylobacter hominis (strain ATCC BAA-381 / DSM 21671 / CCUG 45161 / LMG 19568 / NCTC 13146 / CH001A).